The chain runs to 369 residues: UDP-N-acetyl-3-dehydro-alpha-D-glucosamine 3-aminotranferase (369 aa).

An N6-(pyridoxal phosphate)lysine modification is found at Lys-190.

This sequence belongs to the DegT/DnrJ/EryC1 family. The cofactor is pyridoxal 5'-phosphate.

The catalysed reaction is UDP-2-acetamido-3-amino-2,3-dideoxy-alpha-D-glucopyranose + 2-oxoglutarate = UDP-2-acetamido-3-dehydro-2-deoxy-alpha-D-glucopyranose + L-glutamate. It functions in the pathway bacterial outer membrane biogenesis; LPS lipid A biosynthesis. Functionally, aminotranferase involved in the synthesis of 2,3-diamino-2,3-dideoxy-D-glucopyranose (GlcN3N), which is a component of lipid A in some species. Catalyzes the amination of UDP-2-acetamido-3-dehydro-2-deoxy-alpha-D-glucopyranose (UDP-3-oxo-GlcNAc) to UDP-2-acetamido-3-amino-2,3-dideoxy-alpha-D-glucopyranose (UDP-GlcNAc3N), using L-glutamate as the amine donor. Other amine donors, such as alanine and glutamine, can substitute for glutamate, but product formation is slower. The protein is UDP-N-acetyl-3-dehydro-alpha-D-glucosamine 3-aminotranferase of Acidithiobacillus ferrooxidans (strain ATCC 23270 / DSM 14882 / CIP 104768 / NCIMB 8455) (Ferrobacillus ferrooxidans (strain ATCC 23270)).